Reading from the N-terminus, the 88-residue chain is Small ribosomal subunit protein bS20 (88 aa).

The protein belongs to the bacterial ribosomal protein bS20 family.

Functionally, binds directly to 16S ribosomal RNA. The sequence is that of Small ribosomal subunit protein bS20 from Bartonella tribocorum (strain CIP 105476 / IBS 506).